The chain runs to 445 residues: Phosphoglucosamine mutase (445 aa).

The active-site Phosphoserine intermediate is the S105. 4 residues coordinate Mg(2+): S105, D244, D246, and D248. S105 carries the post-translational modification Phosphoserine.

This sequence belongs to the phosphohexose mutase family. The cofactor is Mg(2+). Post-translationally, activated by phosphorylation.

It carries out the reaction alpha-D-glucosamine 1-phosphate = D-glucosamine 6-phosphate. Functionally, catalyzes the conversion of glucosamine-6-phosphate to glucosamine-1-phosphate. The chain is Phosphoglucosamine mutase from Janthinobacterium sp. (strain Marseille) (Minibacterium massiliensis).